A 131-amino-acid polypeptide reads, in one-letter code: Small ribosomal subunit protein uS9 (131 aa).

The protein belongs to the universal ribosomal protein uS9 family.

This is Small ribosomal subunit protein uS9 from Mannheimia succiniciproducens (strain KCTC 0769BP / MBEL55E).